A 332-amino-acid chain; its full sequence is Biotin synthase (332 aa).

Residues Ser-46–Arg-275 enclose the Radical SAM core domain. Cys-61, Cys-65, and Cys-68 together coordinate [4Fe-4S] cluster. [2Fe-2S] cluster-binding residues include Cys-106, Cys-138, Cys-198, and Arg-270.

It belongs to the radical SAM superfamily. Biotin synthase family. In terms of assembly, homodimer. The cofactor is [4Fe-4S] cluster. Requires [2Fe-2S] cluster as cofactor.

The enzyme catalyses (4R,5S)-dethiobiotin + (sulfur carrier)-SH + 2 reduced [2Fe-2S]-[ferredoxin] + 2 S-adenosyl-L-methionine = (sulfur carrier)-H + biotin + 2 5'-deoxyadenosine + 2 L-methionine + 2 oxidized [2Fe-2S]-[ferredoxin]. The protein operates within cofactor biosynthesis; biotin biosynthesis; biotin from 7,8-diaminononanoate: step 2/2. In terms of biological role, catalyzes the conversion of dethiobiotin (DTB) to biotin by the insertion of a sulfur atom into dethiobiotin via a radical-based mechanism. The polypeptide is Biotin synthase (Methylobacterium sp. (strain 4-46)).